Here is a 336-residue protein sequence, read N- to C-terminus: Tetraacyldisaccharide 4'-kinase (336 aa).

T60–T67 serves as a coordination point for ATP.

The protein belongs to the LpxK family.

It carries out the reaction a lipid A disaccharide + ATP = a lipid IVA + ADP + H(+). It functions in the pathway glycolipid biosynthesis; lipid IV(A) biosynthesis; lipid IV(A) from (3R)-3-hydroxytetradecanoyl-[acyl-carrier-protein] and UDP-N-acetyl-alpha-D-glucosamine: step 6/6. Transfers the gamma-phosphate of ATP to the 4'-position of a tetraacyldisaccharide 1-phosphate intermediate (termed DS-1-P) to form tetraacyldisaccharide 1,4'-bis-phosphate (lipid IVA). The polypeptide is Tetraacyldisaccharide 4'-kinase (Pseudomonas fluorescens (strain Pf0-1)).